Consider the following 342-residue polypeptide: Inositol 2-dehydrogenase 2 (342 aa).

The protein belongs to the Gfo/Idh/MocA family. In terms of assembly, homotetramer.

It carries out the reaction myo-inositol + NAD(+) = scyllo-inosose + NADH + H(+). Involved in the oxidation of myo-inositol (MI) to 2-keto-myo-inositol (2KMI or 2-inosose). This Mycolicibacterium vanbaalenii (strain DSM 7251 / JCM 13017 / BCRC 16820 / KCTC 9966 / NRRL B-24157 / PYR-1) (Mycobacterium vanbaalenii) protein is Inositol 2-dehydrogenase 2.